We begin with the raw amino-acid sequence, 179 residues long: Cytochrome b6-f complex iron-sulfur subunit (179 aa).

A helical transmembrane segment spans residues 21-43 (LLTFGSATGVALGMLYPVVRYFI). Positions 61 to 162 (GNDISVSDFL…AAVSDDKITF (102 aa)) constitute a Rieske domain. C108, H110, C126, and H129 together coordinate [2Fe-2S] cluster. C113 and C128 are joined by a disulfide.

Belongs to the Rieske iron-sulfur protein family. As to quaternary structure, the 4 large subunits of the cytochrome b6-f complex are cytochrome b6, subunit IV (17 kDa polypeptide, PetD), cytochrome f and the Rieske protein, while the 4 small subunits are PetG, PetL, PetM and PetN. The complex functions as a dimer. It depends on [2Fe-2S] cluster as a cofactor.

The protein resides in the cellular thylakoid membrane. The enzyme catalyses 2 oxidized [plastocyanin] + a plastoquinol + 2 H(+)(in) = 2 reduced [plastocyanin] + a plastoquinone + 4 H(+)(out). In terms of biological role, component of the cytochrome b6-f complex, which mediates electron transfer between photosystem II (PSII) and photosystem I (PSI), cyclic electron flow around PSI, and state transitions. The polypeptide is Cytochrome b6-f complex iron-sulfur subunit (Cyanothece sp. (strain PCC 7425 / ATCC 29141)).